Here is a 514-residue protein sequence, read N- to C-terminus: Maturase K (514 aa).

Belongs to the intron maturase 2 family. MatK subfamily.

The protein resides in the plastid. It localises to the chloroplast. Its function is as follows. Usually encoded in the trnK tRNA gene intron. Probably assists in splicing its own and other chloroplast group II introns. In Phoenix dactylifera (Date palm), this protein is Maturase K.